A 1538-amino-acid chain; its full sequence is Myosin-9 (1538 aa).

Positions 16-65 constitute a Myosin N-terminal SH3-like domain; sequence SIGSHVWFEDPEVAWIDGEVEKINGQEVVIQATTGKKVTAKLSKIYPKDV. Residues 70–740 form the Myosin motor domain; sequence GGVDDMTKLS…QMAELDARRA (671 aa). Residues 164 to 171 and 217 to 225 each bind ATP; these read GESGAGKT and NNNSSRFGK. 4 actin-binding regions span residues 503–537, 539–562, 597–621, and 621–643; these read LIEK…YQTF, THKR…AGEV, FPPL…KLQL, and LQQL…KPNN. IQ domains follow at residues 743–772, 766–795, 791–820, 814–843, 839–868, and 862–891; these read LSSA…ATIS, LRKA…EAAA, REAA…ASLV, LHVA…TKAA, QTKA…GVVL, and LKNG…AARE. The stretch at 892–1064 forms a coiled coil; the sequence is TGALKEAKDM…VLRQQAVSMA (173 aa). Over residues 1017–1032 the composition is skewed to basic and acidic residues; sequence SLEDKKKKLEETEKKG. Disordered regions lie at residues 1017–1041 and 1098–1121; these read SLED…SLTR and SHSI…NEKQ. The 314-residue stretch at 1168–1481 folds into the Dilute domain; it reads DRIIQTIGHA…IANMRVLMTE (314 aa).

Belongs to the TRAFAC class myosin-kinesin ATPase superfamily. Myosin family. Plant myosin class XI subfamily. In terms of assembly, homodimer.

Myosin heavy chain that is required for the cell cycle-regulated transport of various organelles and proteins for their segregation. Functions by binding with its tail domain to receptor proteins on organelles and exerting force with its N-terminal motor domain against actin filaments, thereby transporting its cargo along polarized actin cables. Involved in trafficking of Golgi stacks and mitochondria. In Arabidopsis thaliana (Mouse-ear cress), this protein is Myosin-9 (XI-C).